The sequence spans 257 residues: Imidazole glycerol phosphate synthase subunit HisF (257 aa).

Active-site residues include Asp-12 and Asp-131.

Belongs to the HisA/HisF family. In terms of assembly, heterodimer of HisH and HisF.

The protein resides in the cytoplasm. The enzyme catalyses 5-[(5-phospho-1-deoxy-D-ribulos-1-ylimino)methylamino]-1-(5-phospho-beta-D-ribosyl)imidazole-4-carboxamide + L-glutamine = D-erythro-1-(imidazol-4-yl)glycerol 3-phosphate + 5-amino-1-(5-phospho-beta-D-ribosyl)imidazole-4-carboxamide + L-glutamate + H(+). Its pathway is amino-acid biosynthesis; L-histidine biosynthesis; L-histidine from 5-phospho-alpha-D-ribose 1-diphosphate: step 5/9. Functionally, IGPS catalyzes the conversion of PRFAR and glutamine to IGP, AICAR and glutamate. The HisF subunit catalyzes the cyclization activity that produces IGP and AICAR from PRFAR using the ammonia provided by the HisH subunit. The polypeptide is Imidazole glycerol phosphate synthase subunit HisF (Nocardia farcinica (strain IFM 10152)).